Consider the following 510-residue polypeptide: Lysine--tRNA ligase (510 aa).

Positions 420 and 427 each coordinate Mg(2+).

This sequence belongs to the class-II aminoacyl-tRNA synthetase family. Homodimer. Mg(2+) is required as a cofactor.

The protein resides in the cytoplasm. The enzyme catalyses tRNA(Lys) + L-lysine + ATP = L-lysyl-tRNA(Lys) + AMP + diphosphate. The polypeptide is Lysine--tRNA ligase (Vibrio campbellii (strain ATCC BAA-1116)).